The sequence spans 353 residues: Probable arabinan endo-1,5-alpha-L-arabinosidase B (353 aa).

The signal sequence occupies residues 1–16 (MVLVATLFSLFTVSLC). Asp-39 serves as the catalytic Proton acceptor. N-linked (GlcNAc...) asparagine glycosylation is present at Asn-194. The disordered stretch occupies residues 202–227 (HLAKHPKTERVNSQDQNPDPLCRDSS). Residue Glu-233 is the Proton donor of the active site.

It belongs to the glycosyl hydrolase 43 family.

The protein localises to the secreted. The enzyme catalyses Endohydrolysis of (1-&gt;5)-alpha-arabinofuranosidic linkages in (1-&gt;5)-arabinans.. Its pathway is glycan metabolism; L-arabinan degradation. Functionally, endo-1,5-alpha-L-arabinanase involved in degradation of pectin. Its preferred substrate is linear 1,5-alpha-L-arabinan. This is Probable arabinan endo-1,5-alpha-L-arabinosidase B (abnB) from Aspergillus oryzae (strain ATCC 42149 / RIB 40) (Yellow koji mold).